The sequence spans 442 residues: Inner membrane protein PPF-1, chloroplastic (442 aa).

Topologically, residues 1–108 are lumenal; sequence MAKTLISSPS…EFVLKVLKDG (108 aa). A helical membrane pass occupies residues 109–129; the sequence is LSSVHVPYSYGFAIILLTVIV. Residues 130-183 are Stromal-facing; the sequence is KAATLPLTKQQVESTLAMQNLQPKIKAIQERYAGNQERIQLETSRLYTQAGVNP. Residues 184–204 traverse the membrane as a helical segment; it reads LAGCLPTLATIPVWIGLYQAL. At 205 to 296 the chain is on the lumenal side; sequence SNVANEGLLT…QKNTLLIFKF (92 aa). Residues 297–317 traverse the membrane as a helical segment; sequence LPLMIGYFSLSVPSGLTIYWF. At 318-442 the chain is on the stromal side; it reads TNNVLSTAQQ…SKRSKRKPVA (125 aa). 2 disordered regions span residues 350–371 and 390–442; these read AGQA…RQLK and PLAS…KPVA. A compositionally biased stretch (basic and acidic residues) spans 358 to 371; the sequence is SKPEKGGERFRQLK. The span at 414–427 shows a compositional bias: polar residues; that stretch reads ESNTSKVSQEVQSF. Residues 431–442 show a composition bias toward basic residues; sequence RRSKRSKRKPVA.

The protein belongs to the OXA1/ALB3/YidC (TC 2.A.9.2) family. In terms of tissue distribution, highly expressed in apical buds. Low levels of expression in leaves. Not expressed in roots, and stems.

The protein localises to the plastid. It localises to the chloroplast thylakoid membrane. May be required for the insertion of some integral membrane proteins into the chloroplast thylakoid membrane. May play a role in inhibiting senescence. The protein is Inner membrane protein PPF-1, chloroplastic (PPF-1) of Pisum sativum (Garden pea).